A 117-amino-acid polypeptide reads, in one-letter code: Cuticular protein 47Eg (117 aa).

An N-terminal signal peptide occupies residues 1–16 (MKFFIAFACLLAVALA). Residues 31–97 (VDGFAYAVEL…SANPPLPTPP (67 aa)) form the Chitin-binding type R&amp;R domain.

Functionally, component of the larval cuticle. In Drosophila melanogaster (Fruit fly), this protein is Cuticular protein 47Eg (Cpr47Eg).